The primary structure comprises 188 residues: Elongation factor P-like protein (188 aa).

It belongs to the elongation factor P family.

The sequence is that of Elongation factor P-like protein from Stenotrophomonas maltophilia (strain K279a).